The primary structure comprises 388 residues: Protein Bel-2 (388 aa).

It belongs to the spumavirus protein Bel-2 family.

The sequence is that of Protein Bel-2 (bel2) from Simian foamy virus type 3 (strain LK3) (SFVagm).